A 461-amino-acid polypeptide reads, in one-letter code: tRNA modification GTPase MnmE (461 aa).

Residues Arg27, Glu89, and Arg128 each contribute to the (6S)-5-formyl-5,6,7,8-tetrahydrofolate site. Residues 224–382 form the TrmE-type G domain; the sequence is GLATAIVGRP…LENAIEQLFF (159 aa). K(+) is bound at residue Asn234. GTP is bound by residues 234 to 239, 253 to 259, and 278 to 281; these read NVGKSS, TDIAGTT, and DTAG. Residue Ser238 coordinates Mg(2+). K(+) is bound by residues Thr253, Ile255, and Thr258. Residue Thr259 participates in Mg(2+) binding. A (6S)-5-formyl-5,6,7,8-tetrahydrofolate-binding site is contributed by Lys461.

Belongs to the TRAFAC class TrmE-Era-EngA-EngB-Septin-like GTPase superfamily. TrmE GTPase family. Homodimer. Heterotetramer of two MnmE and two MnmG subunits. Requires K(+) as cofactor.

It is found in the cytoplasm. In terms of biological role, exhibits a very high intrinsic GTPase hydrolysis rate. Involved in the addition of a carboxymethylaminomethyl (cmnm) group at the wobble position (U34) of certain tRNAs, forming tRNA-cmnm(5)s(2)U34. The polypeptide is tRNA modification GTPase MnmE (Lactobacillus johnsonii (strain CNCM I-12250 / La1 / NCC 533)).